The primary structure comprises 279 residues: 3-methyl-2-oxobutanoate hydroxymethyltransferase (279 aa).

The Mg(2+) site is built by Asp-43 and Asp-82. Residues 43–44 (DS), Asp-82, and Lys-112 contribute to the 3-methyl-2-oxobutanoate site. Position 114 (Glu-114) interacts with Mg(2+). Glu-181 serves as the catalytic Proton acceptor.

Belongs to the PanB family. In terms of assembly, homodecamer; pentamer of dimers. The cofactor is Mg(2+).

The protein resides in the cytoplasm. It carries out the reaction 3-methyl-2-oxobutanoate + (6R)-5,10-methylene-5,6,7,8-tetrahydrofolate + H2O = 2-dehydropantoate + (6S)-5,6,7,8-tetrahydrofolate. The protein operates within cofactor biosynthesis; (R)-pantothenate biosynthesis; (R)-pantoate from 3-methyl-2-oxobutanoate: step 1/2. Functionally, catalyzes the reversible reaction in which hydroxymethyl group from 5,10-methylenetetrahydrofolate is transferred onto alpha-ketoisovalerate to form ketopantoate. The protein is 3-methyl-2-oxobutanoate hydroxymethyltransferase of Geobacillus sp. (strain WCH70).